A 281-amino-acid polypeptide reads, in one-letter code: Eukaryotic translation initiation factor 3 subunit G (281 aa).

The interval 1-32 is disordered; that stretch reads MSRPAGRTDWAEEDDETELALPSQTVVKNKDG. The RRM domain occupies 202 to 280; it reads ATLRVTNVSE…LILRVEFAKK (79 aa).

It belongs to the eIF-3 subunit G family. In terms of assembly, component of the eukaryotic translation initiation factor 3 (eIF-3) complex.

The protein localises to the cytoplasm. RNA-binding component of the eukaryotic translation initiation factor 3 (eIF-3) complex, which is involved in protein synthesis of a specialized repertoire of mRNAs and, together with other initiation factors, stimulates binding of mRNA and methionyl-tRNAi to the 40S ribosome. The eIF-3 complex specifically targets and initiates translation of a subset of mRNAs involved in cell proliferation. This subunit can bind 18S rRNA. The polypeptide is Eukaryotic translation initiation factor 3 subunit G (Phaeosphaeria nodorum (strain SN15 / ATCC MYA-4574 / FGSC 10173) (Glume blotch fungus)).